The chain runs to 187 residues: Mitochondrial import receptor subunit TOM20-4 (187 aa).

Met-1 carries the N-acetylmethionine modification. Residues 1–160 (MDMQNENERL…QKKTSEFKYD (160 aa)) are Cytoplasmic-facing. The TPR repeat unit spans residues 84–117 (LSFGFLSSDQTEASDNFEKASQFFQLAVEEQPES). A helical membrane pass occupies residues 161–178 (VFGWVILASYVVAWISFA). Topologically, residues 179–187 (NSQTPVSRQ) are mitochondrial intermembrane. Positions 179-187 (NSQTPVSRQ) match the AKR2A-binding sequence (ABS) required for mitochondrion outer membrane targeting motif.

This sequence belongs to the Tom20 family. As to quaternary structure, forms part of the preprotein translocase complex of the outer mitochondrial membrane (TOM complex) which consists of at least 6 different proteins (TOM5, TOM6, TOM7, TOM20, TOM22/TOM9 and TOM40). Interacts with a variety of mitochondrial precursor proteins. Interacts with AKR2A. Component of a mitochondrial large protein complex that contains, at least, MIC60, DGS1, TOM40, TOM20 proteins, and petC/RISP. The N-terminus is blocked. As to expression, expressed in roots, flowers, young cotyledons and leaves.

It is found in the mitochondrion outer membrane. Central component of the receptor complex responsible for the recognition and translocation of cytosolically synthesized mitochondrial preproteins. Together with TOM22 functions as the transit peptide receptor at the surface of the mitochondrion outer membrane and facilitates the movement of preproteins into the translocation pore. This is Mitochondrial import receptor subunit TOM20-4 from Arabidopsis thaliana (Mouse-ear cress).